The following is a 176-amino-acid chain: Oxaleimides biosynthesis cluster protein N (176 aa).

Helical transmembrane passes span 5 to 25 (LLVVSAGSLALKVLRVTPLIT), 71 to 91 (VWTGVISIVLFTRVALILNLF), 104 to 124 (FLYGVGLFLSFAHLSVAPKML), and 155 to 175 (FWIVDVPFWVVGVWATLEGLK).

Its subcellular location is the membrane. It functions in the pathway secondary metabolite biosynthesis. Part of the gene cluster that mediates the biosynthesis of oxaleimides, cytotoxic compounds containing an unusual disubstituted succinimide moiety. The first step of the pathway is provided by the HR-PKS poxF that serves in a new mode of collaborative biosynthesis with the PKS-NRPS poxE, by providing the olefin containing amino acid substrate via the synthesis of an ACP-bound dec-4-enoate. The cytochrome P450 monooxygenase poxM-catalyzed oxidation at the alpha-position creates the enzyme-bound 2-hydroxydec-4-enoyl-ACP thioester, which may be prone to spontaneous hydrolysis to yield 2-hydroxydec-4-enoic acid due to increased electrophilicity of the carbonyl. 2-hydroxydec-4-enoic acid can then be further oxidized by poxM to yield the alpha-ketoacid 2-oxodec-4-enoicacid, which is reductively aminated by the aminotransferase poxL to yield (S,E)-2-aminodec-4-enoic acid. The Hybrid PKS-NRPS synthetase poxE then performs condensation between the octaketide product of its PKS modules and the amino group of (S,E)-2-aminodec-4-enoic acid which is activated and incorporated by the adenylation domain. The resulting aminoacyl product can be cyclized by the Diels-Alderase PoxQ and reductively released by the reductive (R) domain of poxE to yield an aldehyde intermediate. The released aldehyde is then substrate for a Knoevenagel condensation by the hydrolyase poxO followed by an oxidation at the 5-position of the pyrrolidone ring. The presence of the olefin from the amino acid building block allows for migration of the substituted allyl group to occur. This allylic transposition reaction takes place in a conjugate addition, semipinacol-like fashion to yield a succinimide intermediate. Iterative two-electron oxidations of the C7 methyl of the succinimide intermediate to the carboxylic acid can be catalyzed by one of two remaining cytochrome P450 monooxygenasess poxC or poxD to yield oxaleimide A. Subsequent oxidation yields the maleimide scaffold oxaleimide I. Both oxaleimide A and oxaleimide I can undergo oxidative modifications in the decalin ring to yield the series of products oxaleimides B to H. This Penicillium oxalicum (strain 114-2 / CGMCC 5302) (Penicillium decumbens) protein is Oxaleimides biosynthesis cluster protein N.